The chain runs to 328 residues: Phosphate acyltransferase (328 aa).

The protein belongs to the PlsX family. In terms of assembly, homodimer. Probably interacts with PlsY.

The protein localises to the cytoplasm. It catalyses the reaction a fatty acyl-[ACP] + phosphate = an acyl phosphate + holo-[ACP]. The protein operates within lipid metabolism; phospholipid metabolism. Catalyzes the reversible formation of acyl-phosphate (acyl-PO(4)) from acyl-[acyl-carrier-protein] (acyl-ACP). This enzyme utilizes acyl-ACP as fatty acyl donor, but not acyl-CoA. This Campylobacter jejuni subsp. jejuni serotype O:23/36 (strain 81-176) protein is Phosphate acyltransferase.